The primary structure comprises 53 residues: Antitoxin RelB3 (53 aa).

In terms of assembly, forms heterodimers with RelE and possibly a heterotetramer RelE3-RelB3(2)-RelE3 from 2 heterodimers. The heterotetramer is probably not very stable in solution.

In terms of biological role, antitoxin component of a type II toxin-antitoxin (TA) system. Probably neutralizes the toxic activity of cognate toxin RelE. The sequence is that of Antitoxin RelB3 (relB3) from Methanocaldococcus jannaschii (strain ATCC 43067 / DSM 2661 / JAL-1 / JCM 10045 / NBRC 100440) (Methanococcus jannaschii).